A 473-amino-acid chain; its full sequence is O-methyltransferase ARMGADRAFT_1088206 (473 aa).

S-adenosyl-L-methionine contacts are provided by residues 276-277, D299, 330-331, and R348; these read AG and DM. H352 acts as the Proton acceptor in catalysis.

The protein belongs to the class I-like SAM-binding methyltransferase superfamily. Cation-independent O-methyltransferase family.

Its pathway is secondary metabolite biosynthesis. Functionally, O-methyltransferase, part of the gene cluster that mediates the biosynthesis of melleolides, a range of antifungal and phytotoxic polyketide derivatives composed of an orsellinic acid (OA) moiety esterified to various sesquiterpene alcohols. The first step in melleolides biosynthesis is performed by the delta(6)-protoilludene synthase PRO1 which catalyzes the cyclization of farnesyl diphosphate to protoilludene. The orsellinic acid synthase armB produces OA by condensing acetyl-CoA with 3 malonyl-CoA units in a three-round chain elongation reaction folowed by a C2-C7 ring closure. ArmB further catalyzes the trans-esterification of OA to the various sesquiterpene alcohols resulting from the hydroxylation of protoilludene. The melleolides cluster also includes 5 cytochrome P450 monooxygenases, 4 NAD(+)-dependent oxidoreductases, one flavin-dependent oxidoreductase, and one O-methyltransferase. The cytochrome P450 monooxygenases may be involved in protoilludene hydroxylation to elaborate melleolides with multiple alcohol groups, such as melleolide D, which carries alcohol functionalities at C-4, C-5, C-10, and C-13. The role of the NAD(+)-dependent enzymes remains unknown. Numerous melleolides, including arnamial, show 5'-O-methylation of the aromatic moiety which may be catalyzed by the methyltransferase encoded in the cluster. The flavin-dependent oxidoreductase might represent the dehydrogenase yielding the aldehyde in position 1 of arnamial and other melleolides. Finally, several halogenase localized outside of the cluster, are able to catalyze the transfer of a single chlorine atom to the melleolide backbone, resulting in a 6'-chloromelleolide product. This is O-methyltransferase ARMGADRAFT_1088206 from Armillaria gallica (Bulbous honey fungus).